The following is a 1140-amino-acid chain: MTTAVERKYINIRKRLDQLGYRQTLTVECLPLVEKLFSDLVHTTESLRQSKLSAVKAEKESANFDFVLEPYKLENARLSRENNELYLELMKLREHSDQHVKELKTSLKKCARETADLKFLNNQYAHKLKLLEKESKAKNERIQQLQEKNLHAVVQTPGGKKRSIAFRRQRMQIDEPVPPSEVSSYPVPQPDDPYIADLLQVADNRIQELQQEVHQLQEKLAMMESGVRDYSKQIELREREIERLSVALDGGRSPDVLSLESRNKTNEKLIAHLNIQVDFLQQANKDLEKRIRELMETKETVTSEVVNLSNKNEKLCQELTEIDQLAQQLERHKEEVLETADKELGEAKKEIKRKLSEMQDLEETMAKLQLELNLCQKEKERLSDELLVKSDLETVVHQLEQEKQRLSKKVESFAVTERQLTLEVERMRLEHGIKRRDRSPSRLDTFLKGIEEERDYYKKELERLQHIIQRRSCSTSYSAREKSSIFRTPEKGDYNSEIHQITRERDELQRMLERFEKYMEDIQSNVKLLTAERDKLSVLYNEAQEELSALRKESTQTTAPHNIVSLMEKEKELALSDLRRIMAEKEALREKLEHIEEVSLFGKSELEKTIEHLTCVNHQLESEKYELKSKVLIMKETIESLENKLKVQAQKFSHVAGDSSHQKTEVNSLRIVNEQLQRSVDDYQHRLSIKRGELESAQAQIKILEEKIDELNLKMTSQDEEAHVMKKTIGVIDKEKDFLQETVDEKTEKIANLQENLANKEKAVAQMKIMISECESSVNQLKETLVNRDREINSLRRQLDAAHKELDEVGRSREIAFKENRRLQDDLATMARENQEISLELEAAVQEKEEMKSRVHKYITEVSRWESLMAAKEKENQDLLDRFQMLHNRAEDWEVKAHQAEGESSSVRLELLSIDTERRHLRERVELLEKEIQEHINAHHAYESQISSMAKAMSRLEEELRHQEDEKATVLNDLSSLRELCIKLDSGKDIMTQQLNSKNLEFERVVVELENVKSESDLLKKQLSNERHTVKNLESLLATNRDKEFHSHLTSHEKDTEIQLLKEKLTLSESKLTSQSRENTMLRAKVAQLQTDYDALKRQISTERYERERAIQEMRRHGLATPPLSSTLRSPSHSPEHRNV.

Positions 11 to 64 (NIRKRLDQLGYRQTLTVECLPLVEKLFSDLVHTTESLRQSKLSAVKAEKESANF) are homodimerization. 2 coiled-coil regions span residues 75–151 (NARL…KNLH) and 199–416 (LQVA…FAVT). 2 positions are modified to phosphoserine: S383 and S439. 3 coiled-coil regions span residues 447-644 (LKGI…LENK), 668-1036 (SLRI…LESL), and 1079-1113 (NTMLRAKVAQLQTDYDALKRQISTERYERERAIQE). S688 is subject to Phosphoserine. Positions 1114 to 1140 (MRRHGLATPPLSSTLRSPSHSPEHRNV) are disordered. T1121 carries the post-translational modification Phosphothreonine. Positions 1121-1133 (TPPLSSTLRSPSH) are enriched in low complexity. The residue at position 1130 (S1130) is a Phosphoserine.

It belongs to the CEP135/TSGA10 family. Homodimer. Interacts with DCTN2. Interacts with CEP250.

It localises to the cytoplasm. It is found in the cytoskeleton. Its subcellular location is the microtubule organizing center. The protein localises to the centrosome. The protein resides in the centriole. Functionally, centrosomal microtubule-binding protein involved in centriole biogenesis. Acts as a scaffolding protein during early centriole biogenesis. Required for the targeting of centriole satellite proteins to centrosomes such as of PCM1, SSX2IP and CEP290 and recruitment of WRAP73 to centrioles. Also required for centriole-centriole cohesion during interphase by acting as a platform protein for CEP250 at the centriole. Required for the recruitment of CEP295 to the proximal end of new-born centrioles at the centriolar microtubule wall during early S phase in a PLK4-dependent manner. This Homo sapiens (Human) protein is Centrosomal protein of 135 kDa.